A 1379-amino-acid chain; its full sequence is DNA-directed RNA polymerase subunit beta'' (1379 aa).

The Zn(2+) site is built by Cys220, Cys293, Cys300, and Cys303.

This sequence belongs to the RNA polymerase beta' chain family. RpoC2 subfamily. As to quaternary structure, in plastids the minimal PEP RNA polymerase catalytic core is composed of four subunits: alpha, beta, beta', and beta''. When a (nuclear-encoded) sigma factor is associated with the core the holoenzyme is formed, which can initiate transcription. Requires Zn(2+) as cofactor.

The protein localises to the plastid. Its subcellular location is the chloroplast. The enzyme catalyses RNA(n) + a ribonucleoside 5'-triphosphate = RNA(n+1) + diphosphate. Functionally, DNA-dependent RNA polymerase catalyzes the transcription of DNA into RNA using the four ribonucleoside triphosphates as substrates. This is DNA-directed RNA polymerase subunit beta'' from Crucihimalaya wallichii (Rock-cress).